The sequence spans 314 residues: MTSQHQEHTGTKRFSIQSDPVEIHRAIVEDGVAIIEGFLTPEQVQKLNKDVDAPLKADREQLKFKADKKDDPHFWLADFIPDHVARVHNLVDFSHCFRHEILNHELLHKICRLTFEESGDYWLGYGAVIENGPGTTEQKWHRDQPRYPLVKEGPDAPEGMLNFFTALTDFDAETGKTQYILGSNKRVELGEPDADHPIEYVGLKPGDTTIVSGKITHRGSDNRSDKMRRAMPIMIIPSILTPFDATCHLSRELVETMTPLAQKMICRRSVMIPAPGTVEVKTGIWCVNMREAGEQIGLKSNQRAKEDAEATDAV.

Residues H141, D143, and H217 each contribute to the Fe cation site.

This sequence belongs to the PhyH family. Homodimer. It depends on Fe cation as a cofactor.

Its pathway is alkaloid biosynthesis; ergot alkaloid biosynthesis. Functionally, dioxygenase; part of the gene cluster that mediates the biosynthesis of fungal ergot alkaloid. DmaW catalyzes the first step of ergot alkaloid biosynthesis by condensing dimethylallyl diphosphate (DMAP) and tryptophan to form 4-dimethylallyl-L-tryptophan. The second step is catalyzed by the methyltransferase easF that methylates 4-dimethylallyl-L-tryptophan in the presence of S-adenosyl-L-methionine, resulting in the formation of 4-dimethylallyl-L-abrine. The catalase easC and the FAD-dependent oxidoreductase easE then transform 4-dimethylallyl-L-abrine to chanoclavine-I which is further oxidized by easD in the presence of NAD(+), resulting in the formation of chanoclavine-I aldehyde. Agroclavine dehydrogenase easG then mediates the conversion of chanoclavine-I aldehyde to agroclavine via a non-enzymatic adduct reaction: the substrate is an iminium intermediate that is formed spontaneously from chanoclavine-I aldehyde in the presence of glutathione. The presence of easA is not required to complete this reaction. Further conversion of agroclavine to paspalic acid is a two-step process involving oxidation of agroclavine to elymoclavine and of elymoclavine to paspalic acid, the second step being performed by the elymoclavine oxidase cloA. Paspalic acid is then further converted to D-lysergic acid. Ergopeptines are assembled from D-lysergic acid and three different amino acids by the D-lysergyl-peptide-synthetases composed each of a monomudular and a trimodular nonribosomal peptide synthetase subunit. LpsB and lpsC encode the monomodular subunits responsible for D-lysergic acid activation and incorporation into the ergopeptine backbone. LpsA1 and A2 subunits encode the trimodular nonribosomal peptide synthetase assembling the tripeptide portion of ergopeptines. LpsA1 is responsible for formation of the major ergopeptine, ergotamine, and lpsA2 for alpha-ergocryptine, the minor ergopeptine of the total alkaloid mixture elaborated by C.purpurea. D-lysergyl-tripeptides are assembled by the nonribosomal peptide synthetases and released as N-(D-lysergyl-aminoacyl)-lactams. Cyclolization of the D-lysergyl-tripeptides is performed by the Fe(2+)/2-ketoglutarate-dependent dioxygenase easH which introduces a hydroxyl group into N-(D-lysergyl-aminoacyl)-lactam at alpha-C of the aminoacyl residue followed by spontaneous condensation with the terminal lactam carbonyl group. The polypeptide is Dioxygenase easH (Claviceps purpurea (strain 20.1) (Ergot fungus)).